We begin with the raw amino-acid sequence, 505 residues long: MSARITPQTPALQALRMRLHAQHQPVVLMRTDCHVCRAEGLAPRSQVLIIAGDRTVQALLYQIDSDLLKTGQIALSEAAWDALDIHEGDLVQVRHPPLLESLSAVRARIHGHRLQTTELQAIVRDVVDGRYTDVALSAFLTATAVLPLDMQETIHLTRAMVDVGDHLQWQAPIVVDKHCVGGLPGNRTTPLVVAIAAANGLVMPKTSSRAITSPAGTADTMETLAPVDLDLDTLRKVVEKEGGCVAWGGAMHLSPADDIFVRIERELDIDTQGQLIASVLSKKIAAGATHIVIDIPVGPTAKVRSRETAEHLAHHLSEVAASFGLVLRCLFTDGNQPVGRGIGPALEARDVLAVLRNEADAPQDLCDRVALVAGAVLELGGVAKEGDGIRLAHETISSGRAWEKFQRICAAQGGFREPPQALYVEPLLATTSGRAVHIDNRKLSRLAKLAGAPESPAAGIQLQVRLGDEVTRGQSLMFLHAQTSGEMAYALAYVHDIGDIVKIEP.

Belongs to the thymidine/pyrimidine-nucleoside phosphorylase family. Type 2 subfamily.

The enzyme catalyses thymidine + phosphate = 2-deoxy-alpha-D-ribose 1-phosphate + thymine. This chain is Putative thymidine phosphorylase, found in Parvibaculum lavamentivorans (strain DS-1 / DSM 13023 / NCIMB 13966).